The following is a 519-amino-acid chain: Protein nucleotidyltransferase YdiU (519 aa).

8 residues coordinate ATP: Gly100, Gly102, Arg103, Lys123, Asp135, Gly136, Arg193, and Arg200. Asp270 acts as the Proton acceptor in catalysis. Asn271 and Asp280 together coordinate Mg(2+). Asp280 serves as a coordination point for ATP.

Belongs to the SELO family. Mg(2+) serves as cofactor. The cofactor is Mn(2+).

It carries out the reaction L-seryl-[protein] + ATP = 3-O-(5'-adenylyl)-L-seryl-[protein] + diphosphate. It catalyses the reaction L-threonyl-[protein] + ATP = 3-O-(5'-adenylyl)-L-threonyl-[protein] + diphosphate. The catalysed reaction is L-tyrosyl-[protein] + ATP = O-(5'-adenylyl)-L-tyrosyl-[protein] + diphosphate. The enzyme catalyses L-histidyl-[protein] + UTP = N(tele)-(5'-uridylyl)-L-histidyl-[protein] + diphosphate. It carries out the reaction L-seryl-[protein] + UTP = O-(5'-uridylyl)-L-seryl-[protein] + diphosphate. It catalyses the reaction L-tyrosyl-[protein] + UTP = O-(5'-uridylyl)-L-tyrosyl-[protein] + diphosphate. Functionally, nucleotidyltransferase involved in the post-translational modification of proteins. It can catalyze the addition of adenosine monophosphate (AMP) or uridine monophosphate (UMP) to a protein, resulting in modifications known as AMPylation and UMPylation. In Xylella fastidiosa (strain 9a5c), this protein is Protein nucleotidyltransferase YdiU.